A 54-amino-acid chain; its full sequence is Photosystem II reaction center protein L (54 aa).

A helical membrane pass occupies residues 33–53 (SLFWGLLLIFVLAVLFSSYIF).

It belongs to the PsbL family. As to quaternary structure, PSII is composed of 1 copy each of membrane proteins PsbA, PsbB, PsbC, PsbD, PsbE, PsbF, PsbH, PsbI, PsbJ, PsbK, PsbL, PsbM, PsbT, PsbX, PsbY, PsbZ, Psb30/Ycf12, at least 3 peripheral proteins of the oxygen-evolving complex and a large number of cofactors. It forms dimeric complexes.

It is found in the plastid. It localises to the chloroplast thylakoid membrane. Functionally, one of the components of the core complex of photosystem II (PSII). PSII is a light-driven water:plastoquinone oxidoreductase that uses light energy to abstract electrons from H(2)O, generating O(2) and a proton gradient subsequently used for ATP formation. It consists of a core antenna complex that captures photons, and an electron transfer chain that converts photonic excitation into a charge separation. This subunit is found at the monomer-monomer interface and is required for correct PSII assembly and/or dimerization. This chain is Photosystem II reaction center protein L, found in Stigeoclonium helveticum (Green alga).